Consider the following 78-residue polypeptide: UPF0335 protein A1E_00570 (78 aa).

This sequence belongs to the UPF0335 family.

In Rickettsia canadensis (strain McKiel), this protein is UPF0335 protein A1E_00570.